The chain runs to 151 residues: Large ribosomal subunit protein bL9 (151 aa).

This sequence belongs to the bacterial ribosomal protein bL9 family.

In terms of biological role, binds to the 23S rRNA. The polypeptide is Large ribosomal subunit protein bL9 (Rhodococcus opacus (strain B4)).